Reading from the N-terminus, the 618-residue chain is V-type proton ATPase catalytic subunit A (618 aa).

Residue 251 to 258 coordinates ATP; that stretch reads GAFGCGKT.

This sequence belongs to the ATPase alpha/beta chains family. V-ATPase is a heteromultimeric enzyme composed of a peripheral catalytic V1 complex (main components: subunits A, B, C, D, E, and F) attached to an integral membrane V0 proton pore complex (main component: the proteolipid protein).

It catalyses the reaction ATP + H2O + 4 H(+)(in) = ADP + phosphate + 5 H(+)(out). Functionally, catalytic subunit of the peripheral V1 complex of vacuolar ATPase. V-ATPase vacuolar ATPase is responsible for acidifying a variety of intracellular compartments in eukaryotic cells. In Dictyostelium discoideum (Social amoeba), this protein is V-type proton ATPase catalytic subunit A (vatA).